The primary structure comprises 514 residues: Nuclear hormone receptor family member nhr-85 (514 aa).

Residues 28-48 are disordered; that stretch reads TSFSSPPATSSSSLLSPSPSS. Positions 110 to 186 form a DNA-binding region, nuclear receptor; it reads TILCQVCSDK…VGMSRDAVRF (77 aa). 2 NR C4-type zinc fingers span residues 113–133 and 150–174; these read CQVC…CEGC and CTRA…LKKC. The NR LBD domain maps to 216 to 514; it reads QYENLTEVMH…VSPVPTTLSE (299 aa). The interval 465–514 is disordered; the sequence is ERPRRISSSGAQEPLNLSLPHVRHQVKRDVDSDEQLEEMKVSPVPTTLSE.

This sequence belongs to the nuclear hormone receptor family.

Its subcellular location is the nucleus. Its function is as follows. Orphan nuclear receptor. This chain is Nuclear hormone receptor family member nhr-85 (nhr-85), found in Caenorhabditis elegans.